Reading from the N-terminus, the 993-residue chain is Serine/threonine-protein phosphatase 6 regulatory ankyrin repeat subunit B (993 aa).

28 ANK repeats span residues 7–36 (TDQP…DVNT), 40–69 (EKRT…RVNA), 73–102 (MWLT…DVNA), 106–135 (NWQT…SVNV), 139–168 (GGRT…NINA), 172–201 (KDRR…EVTC), 205–234 (KGYT…EIDE), 238–267 (YGNT…NVNQ), 271–301 (NGFT…DVNI), 305–334 (DGKS…EIDC), 338–367 (DGNT…DTAK), 371–400 (HSMF…EIDT), 404–433 (FGRT…DFHK), 437–466 (CGRT…NVNE), 470–498 (WGRT…DNSE), 531–561 (EGYN…GFEE), 566–595 (ATKS…DLDI), 599–628 (KGRT…SIFV), 633–662 (TKRT…NPEA), 669–698 (KGQT…NVDT), 702–731 (LGCT…SILC), 735–764 (RGRT…SEED), 771–800 (QGYT…FRKF), 803–832 (NPFT…SSIV), 838–867 (KGRT…PVNA), 871–901 (SGKT…DLTV), 905–934 (DLNT…DESL), and 941–970 (ALQT…CVLA).

In terms of assembly, protein phosphatase 6 (PP6) holoenzyme is proposed to be a heterotrimeric complex formed by the catalytic subunit, a SAPS domain-containing subunit (PP6R) and an ankyrin repeat-domain containing regulatory subunit (ARS). Interacts with PPP6R1.

Its function is as follows. Putative regulatory subunit of protein phosphatase 6 (PP6) that may be involved in the recognition of phosphoprotein substrates. The protein is Serine/threonine-protein phosphatase 6 regulatory ankyrin repeat subunit B (ANKRD44) of Homo sapiens (Human).